The primary structure comprises 392 residues: Heat-inducible transcription repressor HrcA (392 aa).

It belongs to the HrcA family.

Its function is as follows. Negative regulator of class I heat shock genes (grpE-dnaK-dnaJ and groELS operons). Prevents heat-shock induction of these operons. This is Heat-inducible transcription repressor HrcA from Synechococcus sp. (strain JA-3-3Ab) (Cyanobacteria bacterium Yellowstone A-Prime).